The primary structure comprises 153 residues: uncharacterized protein (153 aa).

The N-terminal stretch at 1 to 21 (MKITITSLLFFLVMIVELASA) is a signal peptide.

This is an uncharacterized protein from Saccharomyces cerevisiae (strain ATCC 204508 / S288c) (Baker's yeast).